The following is a 256-amino-acid chain: Hydroxyacylglutathione hydrolase (256 aa).

Residues H57, H59, D61, H62, H115, D134, and H172 each coordinate Zn(2+).

This sequence belongs to the metallo-beta-lactamase superfamily. Glyoxalase II family. Monomer. Zn(2+) is required as a cofactor.

The catalysed reaction is an S-(2-hydroxyacyl)glutathione + H2O = a 2-hydroxy carboxylate + glutathione + H(+). Its pathway is secondary metabolite metabolism; methylglyoxal degradation; (R)-lactate from methylglyoxal: step 2/2. Thiolesterase that catalyzes the hydrolysis of S-D-lactoyl-glutathione to form glutathione and D-lactic acid. The chain is Hydroxyacylglutathione hydrolase from Maricaulis maris (strain MCS10) (Caulobacter maris).